The primary structure comprises 66 residues: Large ribosomal subunit protein bL32 (66 aa).

Belongs to the bacterial ribosomal protein bL32 family.

The sequence is that of Large ribosomal subunit protein bL32 from Leptospira interrogans serogroup Icterohaemorrhagiae serovar copenhageni (strain Fiocruz L1-130).